Reading from the N-terminus, the 173-residue chain is uncharacterized protein (173 aa).

The tract at residues 1–23 is disordered; that stretch reads ELTSVAGSGRVDSTPLGSRGVTD.

As to expression, component of the acid-insoluble and acid-soluble organic matrix of calcified layers of the shell (at protein level).

The protein resides in the secreted. This is an uncharacterized protein from Lottia gigantea (Giant owl limpet).